The sequence spans 114 residues: Hydrogenase maturation factor HypA (114 aa).

Residue His2 participates in Ni(2+) binding. Positions 70, 73, 86, and 89 each coordinate Zn(2+).

This sequence belongs to the HypA/HybF family.

Its function is as follows. Involved in the maturation of [NiFe] hydrogenases. Required for nickel insertion into the metal center of the hydrogenase. This Trichodesmium erythraeum (strain IMS101) protein is Hydrogenase maturation factor HypA.